The following is a 105-amino-acid chain: Integration host factor subunit alpha (105 aa).

The protein belongs to the bacterial histone-like protein family. As to quaternary structure, heterodimer of an alpha and a beta chain.

In terms of biological role, this protein is one of the two subunits of integration host factor, a specific DNA-binding protein that functions in genetic recombination as well as in transcriptional and translational control. This Xanthobacter autotrophicus (strain ATCC BAA-1158 / Py2) protein is Integration host factor subunit alpha.